The sequence spans 104 residues: MAIKKSNKAALSQAASLKQILKRCSSLGKKNQGNCYFNDVPKGHFPVYVGQHRSRYVVPISWLDHHEFQSLLQLAEEEFGFEHEMGLTIPCDEVVFRSLISMFR.

This sequence belongs to the ARG7 family. Interacts with and inhibits PP2C-D subfamily of type 2C phosphatases such as PP2C67/PP2C-D1. As to expression, expressed in etiolated hypocotyls, petioles, leaves and flowers.

It is found in the cell membrane. Functionally, provide a mechanistic link between auxin and plasma membrane H(+)-ATPases (PM H(+)-ATPases, e.g. AHA1 and AHA2), and triggers PM H(+)-ATPases activity by promoting phosphorylation of their C-terminal autoinhibitory domain as a result of PP2C-D subfamily of type 2C phosphatases inhibition, thus leading to the acidification of the apoplast and the facilitation of solutes and water uptake to drive cell expansion. Triggers plant growth probably by promoting cell elongation. Regulates branch angles and bending. Probably involved in light intensity mediated root development. This chain is Protein SMALL AUXIN UP-REGULATED RNA 9, found in Arabidopsis thaliana (Mouse-ear cress).